The primary structure comprises 707 residues: DNA ligase (707 aa).

NAD(+) is bound by residues 36-40 (DADFD), 85-86 (SL), and glutamate 116. The active-site N6-AMP-lysine intermediate is lysine 118. 4 residues coordinate NAD(+): arginine 139, glutamate 180, lysine 298, and lysine 322. 4 residues coordinate Zn(2+): cysteine 416, cysteine 419, cysteine 434, and cysteine 440. Positions 613–707 (AASSKIAGRS…STHVDPERMV (95 aa)) constitute a BRCT domain.

Belongs to the NAD-dependent DNA ligase family. LigA subfamily. Requires Mg(2+) as cofactor. It depends on Mn(2+) as a cofactor.

It carries out the reaction NAD(+) + (deoxyribonucleotide)n-3'-hydroxyl + 5'-phospho-(deoxyribonucleotide)m = (deoxyribonucleotide)n+m + AMP + beta-nicotinamide D-nucleotide.. Functionally, DNA ligase that catalyzes the formation of phosphodiester linkages between 5'-phosphoryl and 3'-hydroxyl groups in double-stranded DNA using NAD as a coenzyme and as the energy source for the reaction. It is essential for DNA replication and repair of damaged DNA. This Nitrosospira multiformis (strain ATCC 25196 / NCIMB 11849 / C 71) protein is DNA ligase.